The following is a 146-amino-acid chain: uncharacterized protein (146 aa).

The region spanning 7–146 is the N-acetyltransferase domain; that stretch reads LQINYKTDEL…EGHDILIWNP (140 aa).

This is an uncharacterized protein from Staphylococcus epidermidis (strain ATCC 12228 / FDA PCI 1200).